The primary structure comprises 111 residues: Cytochrome c3, 26 kDa (111 aa).

The heme c site is built by histidine 30, histidine 33, cysteine 38, cysteine 41, histidine 42, histidine 43, cysteine 54, cysteine 59, histidine 60, histidine 77, cysteine 86, cysteine 89, histidine 90, cysteine 105, cysteine 108, and histidine 109.

In terms of assembly, homodimer. Requires heme c as cofactor.

It is found in the periplasm. Its function is as follows. Participates in sulfate respiration coupled with phosphorylation by transferring electrons from the enzyme dehydrogenase to ferredoxin. The polypeptide is Cytochrome c3, 26 kDa (Desulfomicrobium norvegicum (strain DSM 1741 / NCIMB 8310) (Desulfovibrio baculatus (strain Norway 4))).